The sequence spans 465 residues: Alpha-2A adrenergic receptor (465 aa).

Residues 1–48 (MFRQEQPLAEGSFAPMGSLQPDAGNSSWNGTEAPGGGTRATPYSLQVT) are Extracellular-facing. N-linked (GlcNAc...) asparagine glycans are attached at residues Asn25 and Asn29. The chain crosses the membrane as a helical span at residues 49–74 (LTLVCLAGLLMLFTVFGNVLVIIAVF). Over 75-85 (TSRALKAPQNL) the chain is Cytoplasmic. The helical transmembrane segment at 86–111 (FLVSLASADILVATLVIPFSLANEVM) threads the bilayer. The Extracellular segment spans residues 112–121 (GYWYFGKVWC). An intrachain disulfide couples Cys121 to Cys203. A helical membrane pass occupies residues 122-144 (EIYLALDVLFCTSSIVHLCAISL). The Cytoplasmic segment spans residues 145–164 (DRYWSITQAIEYNLKRTPRR). A helical transmembrane segment spans residues 165-188 (IKAIIVTVWVISAVISFPPLISIE). Residues 189–207 (KKGAGGGQQPAEPSCKIND) are Extracellular-facing. The helical transmembrane segment at 208–232 (QKWYVISSSIGSFFAPCLIMILVYV) threads the bilayer. Residues 233–389 (RIYQIAKRRT…RQNREKRFTF (157 aa)) are Cytoplasmic-facing. Residues 242–377 (TRVPPSRRGP…RAGGAKASRW (136 aa)) form a disordered region. Basic and acidic residues predominate over residues 313-330 (SSEHAERPQGPGKPERGP). Residue Ser346 is modified to Phosphoserine. Residues 353 to 364 (GAAGPGASGSGQ) show a composition bias toward gly residues. Arg368 is subject to Omega-N-methylarginine. The chain crosses the membrane as a helical span at residues 390–414 (VLAVVIGVFVVCWFPFFFTYTLIAV). The Extracellular segment spans residues 415–424 (GCPVPYQLFN). Residues 425-445 (FFFWFGYCNSSLNPVIYTIFN) traverse the membrane as a helical segment. Residues 446–465 (HDFRRAFKKILCRGDRKRIV) lie on the Cytoplasmic side of the membrane. Cys457 is lipidated: S-palmitoyl cysteine.

It belongs to the G-protein coupled receptor 1 family. Adrenergic receptor subfamily. ADRA2A sub-subfamily. In terms of tissue distribution, expressed in brain.

The protein localises to the cell membrane. Alpha-2 adrenergic receptors mediate the catecholamine-induced inhibition of adenylate cyclase through the action of G proteins. In Rattus norvegicus (Rat), this protein is Alpha-2A adrenergic receptor.